Reading from the N-terminus, the 682-residue chain is Potassium-transporting ATPase ATP-binding subunit (682 aa).

4 helical membrane passes run 34 to 54, 62 to 82, 219 to 239, and 254 to 274; these read PVMFIVWIGSLLTTCISIAMA, ALFSVAISGWLWVTVLFANFA, IALTILLIALTIVFLLATATL, and VLVALLVCLIPTTIGGLLSAI. The active-site 4-aspartylphosphate intermediate is Asp-307. ATP-binding positions include Asp-344, Glu-348, 377–384, and Lys-395; that span reads FTAQSRMS. The Mg(2+) site is built by Asp-518 and Asp-522. 3 helical membrane passes run 588–608, 616–636, and 656–676; these read FAIIPAAFAVTYPQLNALNIM, AILSAVIFNALIIVFLIPLAL, and IYGLGGLLVPFIGIKVIDLLL.

This sequence belongs to the cation transport ATPase (P-type) (TC 3.A.3) family. Type IA subfamily. In terms of assembly, the system is composed of three essential subunits: KdpA, KdpB and KdpC.

Its subcellular location is the cell inner membrane. It catalyses the reaction K(+)(out) + ATP + H2O = K(+)(in) + ADP + phosphate + H(+). Its function is as follows. Part of the high-affinity ATP-driven potassium transport (or Kdp) system, which catalyzes the hydrolysis of ATP coupled with the electrogenic transport of potassium into the cytoplasm. This subunit is responsible for energy coupling to the transport system and for the release of the potassium ions to the cytoplasm. In Escherichia coli O157:H7 (strain EC4115 / EHEC), this protein is Potassium-transporting ATPase ATP-binding subunit.